The primary structure comprises 466 residues: Ribulose bisphosphate carboxylase large chain (466 aa).

N6,N6,N6-trimethyllysine is present on Lys-4. 2 residues coordinate substrate: Asn-113 and Thr-163. The active-site Proton acceptor is Lys-165. Substrate is bound at residue Lys-167. Residues Lys-191, Asp-193, and Glu-194 each coordinate Mg(2+). Lys-191 is modified (N6-carboxylysine). His-284 functions as the Proton acceptor in the catalytic mechanism. Positions 285, 317, and 369 each coordinate substrate.

This sequence belongs to the RuBisCO large chain family. Type I subfamily. In terms of assembly, heterohexadecamer of 8 large chains and 8 small chains; disulfide-linked. The disulfide link is formed within the large subunit homodimers. Mg(2+) serves as cofactor. In terms of processing, the disulfide bond which can form in the large chain dimeric partners within the hexadecamer appears to be associated with oxidative stress and protein turnover.

Its subcellular location is the plastid. The protein resides in the chloroplast. It carries out the reaction 2 (2R)-3-phosphoglycerate + 2 H(+) = D-ribulose 1,5-bisphosphate + CO2 + H2O. The enzyme catalyses D-ribulose 1,5-bisphosphate + O2 = 2-phosphoglycolate + (2R)-3-phosphoglycerate + 2 H(+). RuBisCO catalyzes two reactions: the carboxylation of D-ribulose 1,5-bisphosphate, the primary event in carbon dioxide fixation, as well as the oxidative fragmentation of the pentose substrate in the photorespiration process. Both reactions occur simultaneously and in competition at the same active site. The protein is Ribulose bisphosphate carboxylase large chain of Nelsonia canescens (Blue pussyleaf).